Consider the following 1049-residue polypeptide: MKDMDCIPGPKPLPVVGNLFDLDLDNALQSIIRMADEFGPLFQITINGQKQIFATSQALVDELCDETRFHKAVMGGVEKLRMLAQDGLFTAHHGERGWGIAHRILMPAFGPLRIRDMFEDMSDVAHQLCFKWARQGSSASINIAEDFTRLTLDTIALCTMSFRLNSYYNSETMHPFVQSMLYVLKEADLQATLPGVANCVRVKAQRRMSKHIQAMRNIAGDIIKGRRDKPEPVDDLLNTLLNGRDPVTGEGMSDELIISNIITFLVAGHETTSGLLSFTFYYLLQHPHVLEQARNEVDEVVGVGPITVQHLAKLPYIDAVMKESLRLMPTAPAFTVTPKKPEVVGGKWMVNTGQSVHVLLPVCLRDEAVFGPDAGEFRPTRMLEENFSKLPPNSWKPFGNGERGCIGRAFAWQEAQLVVASVLQTFDLVAEDPYYKLRIKETLTIKPDGFRVRATLRRGQSATALSQHNMSAGATASPGSSTHLAGDENGQDTAGGQPISFFYGSNSGTCKALAHRLASTMMTRGFTDQHLAQLDSAVDNLPRDQPTIIVTTTYDGQPTDDAKKFLAWLESGNVPSLHGVSYAVFGCGHQDWTKTFYRIPILIDDLMHKAGATRLTTRGTANAAVSDLFSDLEVWEETNLLPALREKFYLCNSSDFEPLDPHQLQISISKPARVGMHRDLVEGKVTAIRTLTSPGVPEKRHVEFQIPSEMALRPGDHVNILPVNPPCSVLRALARFSLASDHSITFESSNALDLPQATPVSAAELFSSYLELSQPATRINLKSLASATPSDDDKKELLHFHDSYDSLIRDKRVSVLDLLEHFTSITLPIATFISMLPVLRVRTYSLSMAPSFKPLHCSLTFSVVNEPAWSGNGRYLGVGSNYLASLTPGSILYVSPRPAKDAFHLPTDQSSNPIIMICAGSGLAPFRSFIQDRMAWLQQGKPLAKALLFFGCRGPHLDDLYHDELSEFESAGVVEVRRAYSKVPNHYLAKGCRYAQHRLLTETETIQDMWAHNATLYLCGSANLAKGVKAVLENMLGTLSEERYITEIF.

Cys405 is a binding site for heme. Polar residues predominate over residues Ser461–Met470. The tract at residues Ser461 to Gln491 is disordered. Residues Ser471–Thr482 show a composition bias toward low complexity. Residues Ile499–Leu640 enclose the Flavodoxin-like domain. Residues Ser505–Thr509 and Val584–Thr616 each bind FMN. The region spanning Arg678–Pro906 is the FAD-binding FR-type domain.

In the N-terminal section; belongs to the cytochrome P450 family. FAD serves as cofactor. Requires FMN as cofactor. Heme is required as a cofactor.

It carries out the reaction 2 oxidized [cytochrome P450] + NADPH = 2 reduced [cytochrome P450] + NADP(+) + H(+). The catalysed reaction is an organic molecule + reduced [NADPH--hemoprotein reductase] + O2 = an alcohol + oxidized [NADPH--hemoprotein reductase] + H2O + H(+). It catalyses the reaction dodecanoate + reduced [NADPH--hemoprotein reductase] + O2 = 5-hydroxydodecanoate + oxidized [NADPH--hemoprotein reductase] + H2O + H(+). The enzyme catalyses dodecan-1-ol + reduced [NADPH--hemoprotein reductase] + O2 = 1,5-dodecanediol + oxidized [NADPH--hemoprotein reductase] + H2O + H(+). It carries out the reaction dodecanoate + reduced [NADPH--hemoprotein reductase] + O2 = 9-hydroxydodecanoate + oxidized [NADPH--hemoprotein reductase] + H2O + H(+). The catalysed reaction is dodecan-1-ol + reduced [NADPH--hemoprotein reductase] + O2 = 1,4-dodecanediol + oxidized [NADPH--hemoprotein reductase] + H2O + H(+). It catalyses the reaction dodecan-1-ol + reduced [NADPH--hemoprotein reductase] + O2 = 1,6-dodecanediol + oxidized [NADPH--hemoprotein reductase] + H2O + H(+). In terms of biological role, self-sufficient cytochrome P450 monooxygenase that catalyzes the regioselective in-chain hydroxylation of alkanes, fatty alcohols, and fatty acids at the omega-7 position. Performs hydroxylation of C10-C16 n-alkanes and C12 and C14 fatty alcohols; and thereby enables the one step biocatalytic synthesis of rare alcohols such as 5-dodecanol and 7-tetradecanol. Converts 1-dodecanol into 1,5-dodecanediol as major product with very little sub-terminally hydroxylated products with the 1,4-dodecanediol and 1,6-dodecanediol more abundant. Converts dodecanoic acid to 5-hydroxydodecanoic acid which can be further converted into delta-dodecalactone by lactonization of the 5-hydroxy acid at low pH. Also gives sub-terminal hydroxylation of dodecanoic acid with 9-hydroxydodecanoic acid being the second most abundant product. Does not show any significant activity toward tetradecanoic acid. In Penicillium camemberti (strain FM 013), this protein is Self-sufficient cytochrome P450 monooxygenase CYP505E4.